A 240-amino-acid chain; its full sequence is Triosephosphate isomerase (240 aa).

6 to 8 (NLK) provides a ligand contact to substrate. Catalysis depends on histidine 88, which acts as the Electrophile. The Proton acceptor role is filled by glutamate 157. Glycine 163 and serine 193 together coordinate substrate.

It belongs to the triosephosphate isomerase family. Homodimer.

Its subcellular location is the cytoplasm. The catalysed reaction is D-glyceraldehyde 3-phosphate = dihydroxyacetone phosphate. It participates in carbohydrate biosynthesis; gluconeogenesis. It functions in the pathway carbohydrate degradation; glycolysis; D-glyceraldehyde 3-phosphate from glycerone phosphate: step 1/1. Its function is as follows. Involved in the gluconeogenesis. Catalyzes stereospecifically the conversion of dihydroxyacetone phosphate (DHAP) to D-glyceraldehyde-3-phosphate (G3P). This is Triosephosphate isomerase from Sulfurimonas denitrificans (strain ATCC 33889 / DSM 1251) (Thiomicrospira denitrificans (strain ATCC 33889 / DSM 1251)).